A 250-amino-acid polypeptide reads, in one-letter code: Probable transcriptional regulatory protein RHA1_ro06891 (250 aa).

Belongs to the TACO1 family.

Its subcellular location is the cytoplasm. The protein is Probable transcriptional regulatory protein RHA1_ro06891 of Rhodococcus jostii (strain RHA1).